Consider the following 256-residue polypeptide: 2-C-methyl-D-erythritol 4-phosphate cytidylyltransferase (256 aa).

The protein belongs to the IspD/TarI cytidylyltransferase family. IspD subfamily.

The enzyme catalyses 2-C-methyl-D-erythritol 4-phosphate + CTP + H(+) = 4-CDP-2-C-methyl-D-erythritol + diphosphate. It participates in isoprenoid biosynthesis; isopentenyl diphosphate biosynthesis via DXP pathway; isopentenyl diphosphate from 1-deoxy-D-xylulose 5-phosphate: step 2/6. Its function is as follows. Catalyzes the formation of 4-diphosphocytidyl-2-C-methyl-D-erythritol from CTP and 2-C-methyl-D-erythritol 4-phosphate (MEP). In Corynebacterium glutamicum (strain R), this protein is 2-C-methyl-D-erythritol 4-phosphate cytidylyltransferase.